The primary structure comprises 239 residues: Putative ankyrin repeat protein RBE_0489 (239 aa).

ANK repeat units lie at residues 23–52, 80–109, and 113–143; these read ISSR…SPNA, GIDT…FINA, and FGFT…SLTL.

The protein is Putative ankyrin repeat protein RBE_0489 of Rickettsia bellii (strain RML369-C).